Here is a 171-residue protein sequence, read N- to C-terminus: Envelope glycoprotein N (171 aa).

At 1–132 (MARINSNSGT…CSALKYRIYV (132 aa)) the chain is on the virion surface side. A helical transmembrane segment spans residues 133–153 (SSFVSVLNIILYVLLFLASVV). Residues 154-171 (YIRYLCHQSITTETVKDY) are Intravirion-facing.

It belongs to the herpesviridae glycoprotein N family. Interacts (via N-terminus) with gM (via N-terminus). The gM-gN heterodimer forms the gCII complex.

The protein localises to the virion membrane. It is found in the host membrane. Its subcellular location is the host Golgi apparatus. It localises to the host trans-Golgi network. Envelope glycoprotein necessary for proper maturation of gM and modulation of its membrane fusion activity. Also plays a critical role in virion morphogenesis. The sequence is that of Envelope glycoprotein N from Elephas maximus (Indian elephant).